The sequence spans 550 residues: Probable asparagine synthetase [glutamine-hydrolyzing] (550 aa).

The active-site For GATase activity is Cys-2. In terms of domain architecture, Glutamine amidotransferase type-2 spans 2–189; that stretch reads CGIICFIQYG…PNQYVTIDLS (188 aa). Residues 53 to 57, 78 to 80, and Asp-100 contribute to the L-glutamine site; these read RLAIM and NGE. In terms of domain architecture, Asparagine synthetase spans 213–530; that stretch reads YYQSHKSLID…GGRDHIIPHY (318 aa). ATP contacts are provided by residues Leu-256, Val-284, and 360-361; that span reads SG.

It catalyses the reaction L-aspartate + L-glutamine + ATP + H2O = L-asparagine + L-glutamate + AMP + diphosphate + H(+). It participates in amino-acid biosynthesis; L-asparagine biosynthesis; L-asparagine from L-aspartate (L-Gln route): step 1/1. The chain is Probable asparagine synthetase [glutamine-hydrolyzing] from Acanthamoeba polyphaga mimivirus (APMV).